We begin with the raw amino-acid sequence, 455 residues long: uncharacterized protein (455 aa).

The signal sequence occupies residues 1–24 (MKTTKILLHTGVLALSLLATQVMA).

This is an uncharacterized protein from Pseudomonas aeruginosa (strain ATCC 15692 / DSM 22644 / CIP 104116 / JCM 14847 / LMG 12228 / 1C / PRS 101 / PAO1).